The chain runs to 501 residues: Glutamate--tRNA ligase (501 aa).

Residues 11-21 carry the 'HIGH' region motif; the sequence is PSPTGALHIGG. The 'KMSKS' region signature appears at 260–264; sequence KLSKR. Lysine 263 contributes to the ATP binding site.

Belongs to the class-I aminoacyl-tRNA synthetase family. Glutamate--tRNA ligase type 1 subfamily. Monomer.

It localises to the cytoplasm. It catalyses the reaction tRNA(Glu) + L-glutamate + ATP = L-glutamyl-tRNA(Glu) + AMP + diphosphate. Catalyzes the attachment of glutamate to tRNA(Glu) in a two-step reaction: glutamate is first activated by ATP to form Glu-AMP and then transferred to the acceptor end of tRNA(Glu). The sequence is that of Glutamate--tRNA ligase from Flavobacterium psychrophilum (strain ATCC 49511 / DSM 21280 / CIP 103535 / JIP02/86).